The following is a 525-amino-acid chain: MAKNYWGFFLFCLALGLMLNLSQQASLFKRDFYTAGVVEFEPSNELSDNLAGYLEIIQSQNATSTDIIVFPESTLNSAGSTTFVPNPEDQINPCLSDPNATYYEEFLVTLSCAARNASKYIVINLTEKQKCEDIPEDTRPCASNGLNVFNTNVVFDRQGVVVSRYRKVHLYGEPKNSTFLPELSTFETDFGVTFGHFICFDILFYTPAHQLIVEQGITDFVYPAMWFSQLPFLTVNGIFSSKAVQIQLGWSYANNVNLLAAGASDPIVGNSGSGIYHGRSGSLRSVMRQESGERSIYVARVPKYRAKRRMKRDLKRQVATSSSFNIKRDYLENFTSEELKIDAGKIGNLSQNLCHGGFCCHFDLAWRSLGKPSRNTSHYSYRVGIYEGWRNEKRLDVNYIRNCGVFTCSGNSIDDCGQLLPDIQRPLVTFTHVEIRVTYPQSREFLLFPDTLLDNLLPLEPKQFEWSQKRISEESHQVRFALRKSLEVKHLLTFGIYGNYYNNECTFGVGTAEEQLECGYKNPKI.

A signal peptide spans 1 to 27 (MAKNYWGFFLFCLALGLMLNLSQQASL). 2 N-linked (GlcNAc...) asparagine glycosylation sites follow: asparagine 20 and asparagine 61. One can recognise a CN hydrolase domain in the interval 33 to 303 (YTAGVVEFEP…RSIYVARVPK (271 aa)). Residue glutamate 72 is the Proton acceptor of the active site. N-linked (GlcNAc...) asparagine glycans are attached at residues asparagine 99, asparagine 116, and asparagine 124. Residue lysine 167 is the Proton donor of the active site. Asparagine 176 carries an N-linked (GlcNAc...) asparagine glycan. The active-site Nucleophile is the cysteine 199. N-linked (GlcNAc...) asparagine glycans are attached at residues asparagine 333, asparagine 348, and asparagine 375.

It belongs to the carbon-nitrogen hydrolase superfamily. BTD/VNN family. In terms of tissue distribution, expressed in third instar larvae.

It is found in the secreted. This chain is Vanin-like protein 2, found in Drosophila melanogaster (Fruit fly).